Consider the following 644-residue polypeptide: 3D-(3,5/4)-trihydroxycyclohexane-1,2-dione hydrolase 1 (644 aa).

Position 65 (glutamate 65) interacts with thiamine diphosphate. Residues 442–522 (SLPGDLQRMW…INVLLFDNSG (81 aa)) form a thiamine pyrophosphate binding region. Positions 493 and 520 each coordinate Mg(2+).

It belongs to the TPP enzyme family. Mg(2+) serves as cofactor. It depends on thiamine diphosphate as a cofactor.

The catalysed reaction is 3D-3,5/4-trihydroxycyclohexane-1,2-dione + H2O = 5-deoxy-D-glucuronate + H(+). It participates in polyol metabolism; myo-inositol degradation into acetyl-CoA; acetyl-CoA from myo-inositol: step 3/7. Its function is as follows. Involved in the cleavage of the C1-C2 bond of 3D-(3,5/4)-trihydroxycyclohexane-1,2-dione (THcHDO) to yield 5-deoxy-glucuronate (5DG). This is 3D-(3,5/4)-trihydroxycyclohexane-1,2-dione hydrolase 1 from Bacillus cereus (strain ZK / E33L).